Here is a 457-residue protein sequence, read N- to C-terminus: Dolichol phosphate-mannose mannosyltransferase (457 aa).

Topologically, residues 1–12 (MKRLAKAAFSQN) are cytoplasmic. A helical membrane pass occupies residues 13–33 (SLTAPIVSTFVYLISVVRVVL). At 34 to 91 (NGNWPVTSSDTAMFQHIGWMVFSGKRYYIDAWDPKPPLTLELATIIAYISNGDPHLQH) the chain is on the extracellular side. The helical transmembrane segment at 92 to 112 (TLSVVSTIVAGILLTYLISHI) threads the bilayer. Residues 113–120 (TSEITGNQ) are Cytoplasmic-facing. Residues 121 to 141 (FAGLLSGIVFITFPVIHYSAV) traverse the membrane as a helical segment. Topologically, residues 142 to 173 (FGYEPKYFVFLFGLGSIYLSRNPKPILSGAAA) are extracellular. Residues 174 to 194 (AASAGMWQFAIIFPIISFGII) traverse the membrane as a helical segment. Residues 195-211 (SRRKSKDLILKYVFGAT) lie on the Cytoplasmic side of the membrane. A helical membrane pass occupies residues 212-232 (IIAFISLLPIYLQGGLVAMTV). The Extracellular portion of the chain corresponds to 233–259 (EVIIAPLYAGETQSFLYRLVKGVTHLK). A helical transmembrane segment spans residues 260 to 280 (LMIPIALLGMAGILLGFLDDI). The Cytoplasmic portion of the chain corresponds to 281–283 (RER). Residues 284 to 304 (WWVVGLLLWFCIQIFILDYDG) form a helical membrane-spanning segment. Residues 305-307 (ADD) are Extracellular-facing. Residues 308-328 (LFLGIILVSMGIGFAFEKLST) form a helical membrane-spanning segment. Topologically, residues 329–337 (KYESERINS) are cytoplasmic. Residues 338–358 (IVTAVVVCMLIWQVVTLGGVG) traverse the membrane as a helical segment. Residues 359 to 457 (VITNPYSYSG…EEKCGKWRLP (99 aa)) lie on the Extracellular side of the membrane.

The protein resides in the cell membrane. It functions in the pathway cell surface structure biogenesis; S-layer biogenesis. The protein operates within protein modification; protein glycosylation. Involved in the assembly of a N-linked pentasaccharide that decorates the S-layer glycoprotein and flagellins. Transfers mannose, the terminal pentasaccharide residue, from its dedicated dolichol phosphate carrier to the protein-bound glycan comprising the first four subunits of the N-linked pentasaccharide. The polypeptide is Dolichol phosphate-mannose mannosyltransferase (aglS) (Haloferax volcanii (strain ATCC 29605 / DSM 3757 / JCM 8879 / NBRC 14742 / NCIMB 2012 / VKM B-1768 / DS2) (Halobacterium volcanii)).